The sequence spans 382 residues: Anhydro-N-acetylmuramic acid kinase (382 aa).

9–16 (GTSLDGID) serves as a coordination point for ATP.

Belongs to the anhydro-N-acetylmuramic acid kinase family.

The enzyme catalyses 1,6-anhydro-N-acetyl-beta-muramate + ATP + H2O = N-acetyl-D-muramate 6-phosphate + ADP + H(+). It functions in the pathway amino-sugar metabolism; 1,6-anhydro-N-acetylmuramate degradation. Its pathway is cell wall biogenesis; peptidoglycan recycling. Its function is as follows. Catalyzes the specific phosphorylation of 1,6-anhydro-N-acetylmuramic acid (anhMurNAc) with the simultaneous cleavage of the 1,6-anhydro ring, generating MurNAc-6-P. Is required for the utilization of anhMurNAc either imported from the medium or derived from its own cell wall murein, and thus plays a role in cell wall recycling. This is Anhydro-N-acetylmuramic acid kinase from Bacillus cereus (strain Q1).